A 344-amino-acid polypeptide reads, in one-letter code: Uroporphyrinogen decarboxylase (344 aa).

Substrate-binding positions include 25-29, Asp75, Tyr152, Ser207, and His323; that span reads RQAGR.

Belongs to the uroporphyrinogen decarboxylase family. As to quaternary structure, homodimer.

Its subcellular location is the cytoplasm. It carries out the reaction uroporphyrinogen III + 4 H(+) = coproporphyrinogen III + 4 CO2. It participates in porphyrin-containing compound metabolism; protoporphyrin-IX biosynthesis; coproporphyrinogen-III from 5-aminolevulinate: step 4/4. Its function is as follows. Catalyzes the decarboxylation of four acetate groups of uroporphyrinogen-III to yield coproporphyrinogen-III. This is Uroporphyrinogen decarboxylase from Roseobacter denitrificans (strain ATCC 33942 / OCh 114) (Erythrobacter sp. (strain OCh 114)).